A 180-amino-acid polypeptide reads, in one-letter code: Shikimate kinase (180 aa).

14-19 (GAGKST) provides a ligand contact to ATP. Ser18 provides a ligand contact to Mg(2+). Substrate contacts are provided by Asp36, Arg60, and Gly82. Position 120 (Arg120) interacts with ATP. A substrate-binding site is contributed by Arg140. Gln157 is a binding site for ATP.

The protein belongs to the shikimate kinase family. As to quaternary structure, monomer. It depends on Mg(2+) as a cofactor.

The protein localises to the cytoplasm. It carries out the reaction shikimate + ATP = 3-phosphoshikimate + ADP + H(+). It participates in metabolic intermediate biosynthesis; chorismate biosynthesis; chorismate from D-erythrose 4-phosphate and phosphoenolpyruvate: step 5/7. Catalyzes the specific phosphorylation of the 3-hydroxyl group of shikimic acid using ATP as a cosubstrate. The polypeptide is Shikimate kinase (Haemophilus influenzae (strain PittEE)).